Reading from the N-terminus, the 254-residue chain is 5'/3'-nucleotidase SurE (254 aa).

A divalent metal cation is bound by residues aspartate 8, aspartate 9, serine 39, and asparagine 92.

Belongs to the SurE nucleotidase family. Requires a divalent metal cation as cofactor.

The protein resides in the cytoplasm. It carries out the reaction a ribonucleoside 5'-phosphate + H2O = a ribonucleoside + phosphate. The catalysed reaction is a ribonucleoside 3'-phosphate + H2O = a ribonucleoside + phosphate. It catalyses the reaction [phosphate](n) + H2O = [phosphate](n-1) + phosphate + H(+). In terms of biological role, nucleotidase with a broad substrate specificity as it can dephosphorylate various ribo- and deoxyribonucleoside 5'-monophosphates and ribonucleoside 3'-monophosphates with highest affinity to 3'-AMP. Also hydrolyzes polyphosphate (exopolyphosphatase activity) with the preference for short-chain-length substrates (P20-25). Might be involved in the regulation of dNTP and NTP pools, and in the turnover of 3'-mononucleotides produced by numerous intracellular RNases (T1, T2, and F) during the degradation of various RNAs. The chain is 5'/3'-nucleotidase SurE from Edwardsiella ictaluri (strain 93-146).